Reading from the N-terminus, the 1127-residue chain is Glutamate receptor-interacting protein 1 (1127 aa).

Gln-11 carries S-palmitoyl cysteine lipidation. Phosphoserine is present on Ser-43. 6 consecutive PDZ domains span residues 53–136 (VVEL…EYEL), 150–238 (TVEV…EYDV), 252–336 (LVEV…LPHH), 471–560 (EVVL…EFDV), 572–657 (HVKL…RKDE), and 672–754 (TVEL…KKQT). Disordered stretches follow at residues 752–802 (KQTD…PSVD), 840–865 (KQRTSLSPVPKPRSQTYPDVGLSNED), and 942–980 (MARSQLGRQASFQERSSSRPHYSQTTRSNTLPSDVGRKS). Composition is skewed to polar residues over residues 840-856 (KQRTSLSPVPKPRSQTY) and 947-973 (LGRQASFQERSSSRPHYSQTTRSNTLP). Positions 1003 to 1085 (KVTLYKDSGM…KLDLVISRNP (83 aa)) constitute a PDZ 7 domain. The segment at 1108–1127 (FFQQPSHGGNLETREPTNTL) is disordered.

Interacts with EFNB3, GRIA2, GRIA3, GRIPAP1/GRASP1, PPFIA1, PPFIA4, FRAS1, PTPRF, liprins-alpha and the C-terminal tail of PRLHR. Can form homomultimers or heteromultimers with GRIP2. Interacts with EFNB1, EPHA7, EPHB2, KIF5A, KIF5B and KIF5C. Forms a ternary complex with GRIA2 and CSPG4. Interacts with ATAD1 in an ATP-dependent manner. ATAD1-catalyzed ATP hydrolysis disrupts binding to ATAD1 and to GRIA2 and leads to AMPAR complex disassembly. Interacts with SLC30A9 and PLCD4. Interacts with BUD23. Forms a complex with NSG1, GRIA2 and STX12; controls the intracellular fate of AMPAR and the endosomal sorting of the GRIA2 subunit toward recycling and membrane targeting. Interacts with NSG1. In terms of processing, palmitoylation of isoform 2. Expressed in brain. Isoform 2 is the major isoform in brain. Expressed in oligodendrocyte lineage cells.

It localises to the membrane. Its subcellular location is the cytoplasmic vesicle. The protein localises to the perikaryon. The protein resides in the cell projection. It is found in the dendrite. It localises to the cytoplasm. Its subcellular location is the endomembrane system. The protein localises to the postsynaptic cell membrane. The protein resides in the postsynaptic density. It is found in the endoplasmic reticulum membrane. Its function is as follows. May play a role as a localized scaffold for the assembly of a multiprotein signaling complex and as mediator of the trafficking of its binding partners at specific subcellular location in neurons. Through complex formation with NSG1, GRIA2 and STX12 controls the intracellular fate of AMPAR and the endosomal sorting of the GRIA2 subunit toward recycling and membrane targeting. This Mus musculus (Mouse) protein is Glutamate receptor-interacting protein 1 (Grip1).